Consider the following 314-residue polypeptide: Ornithine carbamoyltransferase (314 aa).

Carbamoyl phosphate-binding positions include 58 to 61 (STRT), Gln85, Arg109, and 136 to 139 (HPAQ). Residues Asn169, Asp233, and 237–238 (SM) contribute to the L-ornithine site. Residues 273 to 274 (CL) and Arg301 contribute to the carbamoyl phosphate site.

This sequence belongs to the aspartate/ornithine carbamoyltransferase superfamily. OTCase family.

The protein localises to the cytoplasm. The enzyme catalyses carbamoyl phosphate + L-ornithine = L-citrulline + phosphate + H(+). Its pathway is amino-acid degradation; L-arginine degradation via ADI pathway; carbamoyl phosphate from L-arginine: step 2/2. In terms of biological role, reversibly catalyzes the transfer of the carbamoyl group from carbamoyl phosphate (CP) to the N(epsilon) atom of ornithine (ORN) to produce L-citrulline. The protein is Ornithine carbamoyltransferase of Staphylothermus marinus (strain ATCC 43588 / DSM 3639 / JCM 9404 / F1).